A 460-amino-acid chain; its full sequence is UDP-N-acetylmuramate--L-alanine ligase (460 aa).

112-118 (GTHGKTT) is a binding site for ATP.

The protein belongs to the MurCDEF family.

It localises to the cytoplasm. It carries out the reaction UDP-N-acetyl-alpha-D-muramate + L-alanine + ATP = UDP-N-acetyl-alpha-D-muramoyl-L-alanine + ADP + phosphate + H(+). Its pathway is cell wall biogenesis; peptidoglycan biosynthesis. Functionally, cell wall formation. The chain is UDP-N-acetylmuramate--L-alanine ligase from Pelobacter propionicus (strain DSM 2379 / NBRC 103807 / OttBd1).